The sequence spans 716 residues: Polycystin-2 (716 aa).

2 stretches are compositionally biased toward basic and acidic residues: residues Met-1–Trp-10 and Met-30–Lys-41. Residues Met-1–Ala-44 form a disordered region. Topologically, residues Met-1–Arg-72 are cytoplasmic. A helical membrane pass occupies residues Ser-73–Ala-93. The Extracellular portion of the chain corresponds to Gln-94–Met-324. N-linked (GlcNAc...) asparagine glycans are attached at residues Asn-150 and Asn-177. Cys-180 and Cys-193 form a disulfide bridge. The helical transmembrane segment at Ile-325–Ile-345 threads the bilayer. Topologically, residues Gly-346–Gln-355 are cytoplasmic. The chain crosses the membrane as a helical span at residues Phe-356–Val-376. A glycan (N-linked (GlcNAc...) asparagine) is linked at Asn-377. Over Asn-377 to Tyr-409 the chain is Extracellular. The helical transmembrane segment at Leu-410–Val-430 threads the bilayer. The Cytoplasmic portion of the chain corresponds to Asn-431–Asp-447. Residues Ile-448–Leu-468 traverse the membrane as a helical segment. Residues Cys-469 to Asn-482 lie on the Extracellular side of the membrane. The segment at residues Ser-483–Phe-497 is an intramembrane region (pore-forming). Residues Ser-498 to Ala-510 lie on the Extracellular side of the membrane. The helical transmembrane segment at Phe-511–Ile-531 threads the bilayer. Residues Asn-532–Glu-716 are Cytoplasmic-facing. Position 534 is a phosphoserine; by CK2 (Ser-534). A coiled-coil region spans residues Glu-613–Asp-680. Residues Arg-696–Glu-716 are disordered.

The protein belongs to the polycystin family. In terms of processing, phosphorylated. CK2 (kin-3 and kin-10) and calcineurin act antagonistically to regulate the phosphorylation state. Exclusively expressed in a subset of 3 categories of adult male sensory neurons: ray neurons, hook neurons and head cephalic (CEM) neurons. Expressed in the male tail.

The protein resides in the cell membrane. It is found in the cell projection. It localises to the cilium membrane. The protein localises to the cilium. Its subcellular location is the axon. The protein resides in the dendrite. It is found in the perikaryon. It localises to the endoplasmic reticulum membrane. In terms of biological role, functions as a calcium permeable cation channel. Required for 2 aspects of male mating behavior: response to hermaphrodite contact and vulva location. Acts in the same pathway as lov-1 and atp-2 in response behavior. The chain is Polycystin-2 from Caenorhabditis elegans.